The following is a 637-amino-acid chain: tRNA uridine 5-carboxymethylaminomethyl modification enzyme MnmG (637 aa).

Residue 18 to 23 (GAGHAG) participates in FAD binding. 281–295 (GPRYCPSIEDKIVRF) is an NAD(+) binding site.

This sequence belongs to the MnmG family. Homodimer. Heterotetramer of two MnmE and two MnmG subunits. Requires FAD as cofactor.

It localises to the cytoplasm. Functionally, NAD-binding protein involved in the addition of a carboxymethylaminomethyl (cmnm) group at the wobble position (U34) of certain tRNAs, forming tRNA-cmnm(5)s(2)U34. The sequence is that of tRNA uridine 5-carboxymethylaminomethyl modification enzyme MnmG from Ligilactobacillus salivarius (strain UCC118) (Lactobacillus salivarius).